The chain runs to 305 residues: Axin interactor, dorsalization-associated protein A (305 aa).

Residues 153–220 (GTLLPRLPSE…RKEDTYVHFN (68 aa)) are axin-binding. In terms of domain architecture, C2 Aida-type spans 156 to 303 (LPRLPSEPGM…LYLHLLQTLL (148 aa)).

The protein belongs to the AIDA family.

Its function is as follows. Acts as a ventralizing factor during embryogenesis. Inhibits axin-mediated JNK activation by binding axin and disrupting axin homodimerization. This in turn antagonizes a Wnt/beta-catenin-independent dorsalization pathway activated by axin/JNK-signaling. This is Axin interactor, dorsalization-associated protein A (aida-a) from Xenopus laevis (African clawed frog).